The chain runs to 192 residues: dTTP/UTP pyrophosphatase (192 aa).

Residue Asp-71 is the Proton acceptor of the active site.

The protein belongs to the Maf family. YhdE subfamily. Requires a divalent metal cation as cofactor.

The protein resides in the cytoplasm. The enzyme catalyses dTTP + H2O = dTMP + diphosphate + H(+). It catalyses the reaction UTP + H2O = UMP + diphosphate + H(+). Nucleoside triphosphate pyrophosphatase that hydrolyzes dTTP and UTP. May have a dual role in cell division arrest and in preventing the incorporation of modified nucleotides into cellular nucleic acids. The protein is dTTP/UTP pyrophosphatase of Pseudoalteromonas atlantica (strain T6c / ATCC BAA-1087).